Here is a 138-residue protein sequence, read N- to C-terminus: Cysteine desulfuration protein SufE (138 aa).

Cysteine 51 (cysteine persulfide intermediate) is an active-site residue.

Belongs to the SufE family. In terms of assembly, homodimer. Interacts with SufS.

Its subcellular location is the cytoplasm. It functions in the pathway cofactor biosynthesis; iron-sulfur cluster biosynthesis. In terms of biological role, participates in cysteine desulfuration mediated by SufS. Cysteine desulfuration mobilizes sulfur from L-cysteine to yield L-alanine and constitutes an essential step in sulfur metabolism for biosynthesis of a variety of sulfur-containing biomolecules. Functions as a sulfur acceptor for SufS, by mediating the direct transfer of the sulfur atom from the S-sulfanylcysteine of SufS, an intermediate product of cysteine desulfuration process. The sequence is that of Cysteine desulfuration protein SufE from Pectobacterium carotovorum subsp. carotovorum (strain PC1).